Reading from the N-terminus, the 138-residue chain is Small ribosomal subunit protein uS11c (138 aa).

Residues 1-23 (MAKAIPRRSSRRNGRIGSRKSAR) form a disordered region.

The protein belongs to the universal ribosomal protein uS11 family. In terms of assembly, part of the 30S ribosomal subunit.

Its subcellular location is the plastid. The protein resides in the chloroplast. In Ipomoea purpurea (Common morning glory), this protein is Small ribosomal subunit protein uS11c.